Reading from the N-terminus, the 708-residue chain is Protein psiF (708 aa).

The N-terminal stretch at 1-19 (MKYLFIAIILILYCSFTKA) is a signal peptide. At 20–643 (DQKKFLVNMY…QSTAVKVGVG (624 aa)) the chain is on the extracellular side. Asn-78, Asn-116, Asn-222, Asn-317, Asn-318, Asn-371, Asn-498, and Asn-600 each carry an N-linked (GlcNAc...) asparagine glycan. Positions 103-263 (TQTAGSQNYY…YDYCGICNGK (161 aa)) constitute a PA14 domain. A helical transmembrane segment spans residues 644–664 (IGAAAAAGIAIGGAVAAGLAI). Topologically, residues 665-708 (FGGKKAYDTWKTSRGNVMTGSQSNPLYTQNQNNGNNPLYSAPAE) are cytoplasmic. Residues 682-702 (MTGSQSNPLYTQNQNNGNNPL) are compositionally biased toward polar residues. The segment at 682–708 (MTGSQSNPLYTQNQNNGNNPLYSAPAE) is disordered.

The protein belongs to the prespore-cell-inducing factor family. Forms a complex with dicB.

The protein resides in the membrane. It localises to the secreted. Acts as a quorum sensing protein regulating discoidin gene expression during growth and development. D.discoideum is a single-celled amoebae and switches to multicellular development when food becomes limited. As the growing cells reach a high density, they begin expressing discoidin genes. The ability of psiF/dicA to induce discoidin gene expression when present in conditioned medium, suggests that it allows cells to sense their local density. The polypeptide is Protein psiF (psiF) (Dictyostelium discoideum (Social amoeba)).